Consider the following 774-residue polypeptide: RNA exonuclease 5 (774 aa).

Residues 1–19 (MEPEREGTERHPRKVRESR) show a composition bias toward basic and acidic residues. Residues 1 to 22 (MEPEREGTERHPRKVRESRQAP) form a disordered region. The Exonuclease domain occupies 228–376 (LFGLDCEMCL…EDARTILELA (149 aa)). RRM domains lie at 505–579 (STVY…RPVT) and 600–679 (GSIY…RHLH).

The protein is RNA exonuclease 5 of Homo sapiens (Human).